Reading from the N-terminus, the 542-residue chain is Putative DEAD-box ATP-dependent RNA helicase 43 (542 aa).

Positions 97-125 (KNFMDMKFPSPLLRMLKDKGIMHPTPIQV) match the Q motif motif. In terms of domain architecture, Helicase ATP-binding spans 128–312 (LPVVLSGRDM…TSALVKPVTV (185 aa)). Position 141–148 (141–148 (AFTGSGKT)) interacts with ATP. Residues 260–263 (DEAD) carry the DEAD box motif. In terms of domain architecture, Helicase C-terminal spans 323-483 (DVIQEVEYVK…RIPPVLAELN (161 aa)). The segment at 499–516 (KGCAYCGGLGHRILQCPK) adopts a CCHC-type zinc-finger fold.

The protein belongs to the DEAD box helicase family. DDX41 subfamily.

The catalysed reaction is ATP + H2O = ADP + phosphate + H(+). The sequence is that of Putative DEAD-box ATP-dependent RNA helicase 43 (RH43) from Arabidopsis thaliana (Mouse-ear cress).